The primary structure comprises 499 residues: Probable alkaline/neutral invertase F (499 aa).

The residue at position 11 (Ser-11) is a Phosphoserine. Thr-20 carries the post-translational modification Phosphothreonine. Ser-497 is subject to Phosphoserine.

The protein belongs to the glycosyl hydrolase 100 family.

The catalysed reaction is Hydrolysis of terminal non-reducing beta-D-fructofuranoside residues in beta-D-fructofuranosides.. Its function is as follows. Invertase that cleaves sucrose into glucose and fructose. The chain is Probable alkaline/neutral invertase F from Arabidopsis thaliana (Mouse-ear cress).